The sequence spans 391 residues: cAMP-dependent protein kinase regulatory subunit (391 aa).

Positions 1–84 (MFKSPFGANA…PPNPESYPAQ (84 aa)) are disordered. Residues 1–131 (MFKSPFGANA…RLKTAIAGNF (131 aa)) are dimerization and phosphorylation. Residues 38–55 (TVTSPTSPNFGMNAQSMF) show a composition bias toward polar residues. Position 92 is a phosphoserine (Ser-92). Residues 132–261 (LFSH…FLRE), Glu-210, Arg-219, 264–381 (LLQT…DIKT), Glu-331, and Arg-340 contribute to the 3',5'-cyclic AMP site.

The protein belongs to the cAMP-dependent kinase regulatory chain family. In terms of assembly, tetramer, composed of 2 regulatory (R) and 2 catalytic (C) subunits. In the presence of cAMP it dissociates into 2 active monomeric C subunits and an R dimer.

In Colletotrichum orbiculare (strain 104-T / ATCC 96160 / CBS 514.97 / LARS 414 / MAFF 240422) (Cucumber anthracnose fungus), this protein is cAMP-dependent protein kinase regulatory subunit (PKAR).